Here is a 465-residue protein sequence, read N- to C-terminus: 2-halobenzoate 1,2-dioxygenase large subunit (465 aa).

In terms of domain architecture, Rieske spans 56 to 154; sequence WVFLAHESQV…GFNVDGSHDL (99 aa). Residues Cys98, His100, Cys118, and His121 each contribute to the [2Fe-2S] cluster site. The Fe cation site is built by His227 and His232.

The protein belongs to the bacterial ring-hydroxylating dioxygenase alpha subunit family. In terms of assembly, heterohexamer of 3 large (CbdA) subunits and 3 small (CbdB) subunits. The heterohexamer is part of 2-halobenzoate dioxygenase two component enzyme system. The other component is a NADH:acceptor reductase (CdbC). It depends on [2Fe-2S] cluster as a cofactor. Requires Fe(2+) as cofactor.

It carries out the reaction a 2-halobenzoate + NADH + O2 + H(+) = a halide anion + catechol + CO2 + NAD(+). It functions in the pathway xenobiotic degradation; benzoate degradation via CoA ligation. In terms of biological role, component of 2-halobenzoate dioxygenase multicomponent enzyme system which catalyzes the incorporation of both atoms of molecular oxygen into 2-halobenzoate to form catechol. The sequence is that of 2-halobenzoate 1,2-dioxygenase large subunit (cbdA) from Burkholderia cepacia (Pseudomonas cepacia).